A 323-amino-acid polypeptide reads, in one-letter code: Aquaporin-2 (323 aa).

3 helical membrane passes run 32–54 (FLAV…FTHR), 74–96 (YVAG…SVLG), and 103–123 (CFCY…AIYA). An NPA 1 motif is present at residues 85 to 87 (NPA). N143 carries an N-linked (GlcNAc...) asparagine glycan. 2 helical membrane-spanning segments follow: residues 161–181 (GAFV…LSMV) and 193–213 (FPIA…YNAG). Residues 217–219 (NPS) carry the NPA 2 motif. A helical transmembrane segment spans residues 243–263 (YTWFFVPVVGSHAGAIVGAVI). N292 is a glycosylation site (N-linked (GlcNAc...) asparagine).

Belongs to the MIP/aquaporin (TC 1.A.8) family.

Its subcellular location is the cell membrane. It carries out the reaction H2O(in) = H2O(out). It catalyses the reaction glycerol(in) = glycerol(out). Aquaglyceroporin that may modulate the water content and osmolytes during anhydrobiosis. The chain is Aquaporin-2 from Milnesium tardigradum (Water bear).